Reading from the N-terminus, the 636-residue chain is MEGRGPYRIYDPGGSVPSGEASAAFERLVKENSRLKEKMQGIKMLGELLEESQMEATRLRQKAEELVKDNELLPPPSPSLGSFDPLAELTGKDSNVTASPTAPACPSDKPAPVQKPPSSGTSSEFEVVTPEEQNSPESSSHANAMALGPLPREDGNLMLHLQRLETTLSVCAEEPDHGQLFTHLGRMALEFNRLASKVHKNEQRTSILQTLCEQLRKENEALKAKLDKGLEQRDQAAERLREENLELKKLLMSNGNKEGASGRPGSPKMEGTGKKAVAGQQQASVTAGKVPEVVALGAAEKKVKMLEQQRSELLEVNKQWDQHFRSMKQQYEQKITELRQKLADLQKQVTDLEAEREQKQRDFDRKLLLAKSKIEMEETDKEQLTAEAKELRQKVKYLQDQLSPLTRQREYQEKEIQRLNKALEEALSIQTPPSSPPTAFGSPEGAGALLRKQELVTQNELLKQQVKIFEEDFQRERSDRERMNEEKEELKKQVEKLQAQVTLSNAQLKAFKDEEKAREALRQQKRKAKASGERYHVEPHPEHLCGAYPYAYPPMPAMVPHHGFEDWSQIRYPPPPMAMEHPPPLPNSRLFHLPEYTWRLPCGGVRNPNQSSQVMDPPTARPTEPESPKNDREGPQ.

The stretch at 20–73 forms a coiled coil; the sequence is EASAAFERLVKENSRLKEKMQGIKMLGELLEESQMEATRLRQKAEELVKDNELL. Over residues 61–71 the composition is skewed to basic and acidic residues; that stretch reads QKAEELVKDNE. 2 disordered regions span residues 61 to 151 and 252 to 283; these read QKAE…GPLP and MSNG…QQQA. Serine 77 is subject to Phosphoserine. The tract at residues 94–412 is interaction with Nef; sequence SNVTASPTAP…SPLTRQREYQ (319 aa). A compositionally biased stretch (polar residues) spans 131-142; that stretch reads EEQNSPESSSHA. Residues 196–258 adopt a coiled-coil conformation; the sequence is SKVHKNEQRT…KLLMSNGNKE (63 aa). Serine 284 carries the post-translational modification Phosphoserine. Residues 294 to 535 are a coiled coil; it reads VALGAAEKKV…RKAKASGERY (242 aa). The interaction with Shigella flexneri ipah9.8 stretch occupies residues 351-367; that stretch reads DLEAEREQKQRDFDRKL. At serine 403 the chain carries Phosphoserine. Residues 431–588 are required for inhibitory activity of TNF-induced NF-kappa-B activation; sequence TPPSSPPTAF…MEHPPPLPNS (158 aa). Threonine 438 bears the Phosphothreonine mark. Serine 442 carries the post-translational modification Phosphoserine. The ubiquitin-binding domain (UBD) stretch occupies residues 452-510; sequence KQELVTQNELLKQQVKIFEEDFQRERSDRERMNEEKEELKKQVEKLQAQVTLSNAQLKA. Residues 524–530 carry the Nuclear localization signal motif; the sequence is QKRKAKA. Residue tyrosine 552 is modified to Phosphotyrosine. The residue at position 571 (arginine 571) is an Asymmetric dimethylarginine. Arginine 599 is modified (asymmetric dimethylarginine; alternate). Residue arginine 599 is modified to Omega-N-methylarginine; alternate. The interval 603–636 is disordered; sequence GGVRNPNQSSQVMDPPTARPTEPESPKNDREGPQ. The span at 623–636 shows a compositional bias: basic and acidic residues; that stretch reads TEPESPKNDREGPQ. The residue at position 627 (serine 627) is a Phosphoserine.

In terms of assembly, interacts with TNFAIP3 and IKBKG (polyubiquitinated); facilitates TNFAIP3-mediated de-ubiquitination of NEMO/IKBKG. Interacts with polyubiquitin. Interacts with MAPK1, SELPLG and PIK3CD. Interacts with IRAK1 (polyubiquitinated). Interacts with MYD88; the interaction is indicative for participation in an activated TLR-signaling complex. Interacts with HIV-1 matrix protein. Interacts with TAX1BP1. (Microbial infection) Interacts with Shigella flexneri ipah9.8; the interaction promotes polyubiquitination of IKBKG. In terms of processing, phosphorylation at Tyr-552 by SRC-family kinases recruits phosphoinositide-3-kinase (PI3K) PIK3CD:p85 heterodimer which results in integrin activation and leukocyte adhesion to activated endothelium during inflammation. As to expression, ubiquitous. Strongly expressed in peripheral blood lymphocytes, spleen and skeletal muscle, and is weakly expressed in the brain. In peripheral blood mononucleocytes, isoform 4 is mainly expressed and isoform 1 and isoform 7 are almost not expressed. Expression of isoform 1 and isoform 7 increases in leukemic cells.

The protein resides in the cytoplasm. The protein localises to the nucleus. Inhibits NF-kappa-B activation and TNF-induced NF-kappa-B-dependent gene expression by regulating TAX1BP1 and A20/TNFAIP3-mediated deubiquitination of IKBKG; proposed to link A20/TNFAIP3 to ubiquitinated IKBKG. Involved in regulation of EGF-induced ERK1/ERK2 signaling pathway; blocks MAPK3/MAPK1 nuclear translocation and MAPK1-dependent transcription. Increases cell surface CD4(T4) antigen expression. Involved in the anti-inflammatory response of macrophages and positively regulates TLR-induced activation of CEBPB. Involved in the prevention of autoimmunity; this function implicates binding to polyubiquitin. Involved in leukocyte integrin activation during inflammation; this function is mediated by association with SELPLG and dependent on phosphorylation by SRC-family kinases. Interacts with HIV-1 matrix protein and is packaged into virions and overexpression can inhibit viral replication. May regulate matrix nuclear localization, both nuclear import of PIC (Preintegration complex) and export of GAG polyprotein and viral genomic RNA during virion production. In case of infection, promotes association of IKBKG with Shigella flexneri E3 ubiquitin-protein ligase ipah9.8 p which in turn promotes polyubiquitination of IKBKG leading to its proteasome-dependent degradation and thus is perturbing NF-kappa-B activation during bacterial infection. The sequence is that of TNFAIP3-interacting protein 1 (TNIP1) from Homo sapiens (Human).